Reading from the N-terminus, the 542-residue chain is GATA-type transcription factor sreA (542 aa).

Over residues 1–10 (MLTLRSSSDT) the composition is skewed to polar residues. A disordered region spans residues 1–172 (MLTLRSSSDT…SAQNASGCGS (172 aa)). Positions 44-63 (ADLRPDSFDASRSPDGDKAS) are enriched in basic and acidic residues. Low complexity-rich tracts occupy residues 75–117 (SSDQ…PKAS) and 148–168 (SSTSDPRASPAASDASAQNAS). The cystein-rich region (CRR) stretch occupies residues 178–196 (CPGGGSCNGTGGAVGCDGC). Low complexity predominate over residues 210–223 (APSARQARASPSAQ). Positions 210 to 248 (APSARQARASPSAQTSEEQAQSGLDALDSASQDASGMPK) are disordered. The segment at 250–274 (CQNCGTTLTPLWRRDDQGNTICNAC) adopts a GATA-type zinc-finger fold. Residues 289-300 (MKKTVIKRRKRV) show a composition bias toward basic residues. Disordered regions lie at residues 289-408 (MKKT…PATR) and 461-525 (SNAP…REAE). 2 stretches are compositionally biased toward polar residues: residues 311 to 320 (AGSSDNSSVS) and 369 to 387 (KPTQSTSSPGLNTLINHSP). The span at 396-407 (ESTSAESAPPAT) shows a compositional bias: low complexity. Over residues 464–483 (PARSQTQTQPQPGTRSYSPN) the composition is skewed to polar residues. Residues 510-542 (DKVKAARRAQLQREAENMREALRAKERELASLK) are a coiled coil.

The protein resides in the nucleus. Functionally, GATA-type transcription repressor that regulates iron acquisition genes through specific binding the GATA sequence elements of target promoters. SreA targets include genes encoding a number of key iron-regulated factors such as the siderophore biosynthesis genes. Is dispensable for growth on keratin substrates. SreA represses the expression of hapX and the siderophore system during iron sufficient conditions by an iron-sensing mechanism, while hapX represses sreA and activates the siderophore system during iron-limiting conditions resulting in efficient iron uptake and inhibition of iron-consuming pathways. The chain is GATA-type transcription factor sreA from Arthroderma benhamiae (strain ATCC MYA-4681 / CBS 112371) (Trichophyton mentagrophytes).